Here is a 637-residue protein sequence, read N- to C-terminus: Delta(14)-sterol reductase LBR (637 aa).

Residues 1–62 enclose the Tudor domain; it reads MPNRKYADGE…DIRLQSSFKQ (62 aa). Residues 1-205 are Nuclear-facing; sequence MPNRKYADGE…KTKELEFGGR (205 aa). The span at 57–73 shows a compositional bias: low complexity; that stretch reads QSSFKQRKSQSSSSSPS. The segment at 57 to 151 is disordered; sequence QSSFKQRKSQ…SKLLEQQKLK (95 aa). A compositionally biased stretch (basic residues) spans 74–97; the sequence is RRSRSRSRSRSPGRPAKGRRRSSS. Residues Ser95 and Ser96 each carry the phosphoserine; by PKA modification. 2 stretches are compositionally biased toward basic and acidic residues: residues 98–110 and 124–151; these read HSRE…KKII and NTRR…QKLK. 8 helical membrane-spanning segments follow: residues 206–226, 250–270, 288–309, 317–338, 378–399, 403–425, 466–486, and 554–574; these read FGTF…VLMC, VFGV…LPIG, INGF…YFQF, HFVQ…YLYI, YFCE…MLLA, IHNQ…LYVV, FYLV…ITIL, and PCGF…CLLV.

The protein belongs to the ERG4/ERG24 family. As to quaternary structure, interacts with DNA. Interaction with DNA is sequence independent with higher affinity for supercoiled and relaxed circular DNA than linear DNA.

The protein localises to the nucleus inner membrane. The protein resides in the nucleus. Its subcellular location is the cytoplasm. It localises to the endoplasmic reticulum membrane. It carries out the reaction 5alpha-cholest-8,14-dien-3beta-ol + NADPH + H(+) = 5alpha-cholest-8-en-3beta-ol + NADP(+). It catalyses the reaction 4,4-dimethyl-5alpha-cholesta-8,24-dien-3beta-ol + NADP(+) = 4,4-dimethyl-5alpha-cholesta-8,14,24-trien-3beta-ol + NADPH + H(+). The enzyme catalyses 4,4-dimethyl-8,14-cholestadien-3beta-ol + NADPH + H(+) = 4,4-dimethyl-5alpha-cholest-8-en-3beta-ol + NADP(+). The protein operates within steroid biosynthesis; cholesterol biosynthesis. Catalyzes the reduction of the C14-unsaturated bond of lanosterol, as part of the metabolic pathway leading to cholesterol biosynthesis. Anchors the lamina and the heterochromatin to the inner nuclear membrane. The sequence is that of Delta(14)-sterol reductase LBR (LBR) from Gallus gallus (Chicken).